Here is a 303-residue protein sequence, read N- to C-terminus: tRNA pseudouridine synthase B (303 aa).

Asp-47 serves as the catalytic Nucleophile.

This sequence belongs to the pseudouridine synthase TruB family. Type 1 subfamily.

The catalysed reaction is uridine(55) in tRNA = pseudouridine(55) in tRNA. In terms of biological role, responsible for synthesis of pseudouridine from uracil-55 in the psi GC loop of transfer RNAs. This chain is tRNA pseudouridine synthase B, found in Ruegeria pomeroyi (strain ATCC 700808 / DSM 15171 / DSS-3) (Silicibacter pomeroyi).